Consider the following 142-residue polypeptide: Galactose-6-phosphate isomerase subunit LacA (142 aa).

It belongs to the LacAB/RpiB family. As to quaternary structure, heteromultimeric protein consisting of LacA and LacB.

It carries out the reaction aldehydo-D-galactose 6-phosphate = keto-D-tagatose 6-phosphate. It functions in the pathway carbohydrate metabolism; D-galactose 6-phosphate degradation; D-tagatose 6-phosphate from D-galactose 6-phosphate: step 1/1. The protein is Galactose-6-phosphate isomerase subunit LacA of Clostridium acetobutylicum (strain ATCC 824 / DSM 792 / JCM 1419 / IAM 19013 / LMG 5710 / NBRC 13948 / NRRL B-527 / VKM B-1787 / 2291 / W).